The sequence spans 51 residues: Ovomucoid (51 aa).

Residues V3–C51 enclose the Kazal-like domain. Disulfide bonds link C5–C35, C13–C32, and C21–C51. A glycan (N-linked (GlcNAc...) asparagine) is linked at N42.

Its subcellular location is the secreted. The chain is Ovomucoid from Rhynchotus rufescens (Red-winged tinamou).